Here is a 154-residue protein sequence, read N- to C-terminus: Nuclear cap-binding protein subunit 2 (154 aa).

MRNA is bound by residues tyrosine 10, tyrosine 33, 102–106 (RVDWD), 113–117 (RQYGR), and 123–124 (QV). The RRM domain occupies 30–108 (CTLYVGNLSF…RLIRVDWDAG (79 aa)).

The protein belongs to the RRM NCBP2 family. As to quaternary structure, component of the nuclear cap-binding complex (CBC), a heterodimer composed of Cbp80 and Cbp20 that interacts with m7GpppG-capped RNA. Interacts with Ars2.

The protein localises to the nucleus. In terms of biological role, component of the cap-binding complex (CBC), which binds co-transcriptionally to the 5' cap of pre-mRNAs and is involved in various processes such as pre-mRNA splicing and RNA-mediated gene silencing (RNAi). The CBC complex is involved in miRNA-mediated RNA interference via its interaction with Ars2 and is required for primary microRNAs (miRNAs) processing. Also involved in innate immunity via the short interfering RNAs (siRNAs) processing machinery by restricting the viral RNA production. In the CBC complex, Cbp20 recognizes and binds capped RNAs (m7GpppG-capped RNA) but requires Cbp80 to stabilize the movement of its N-terminal loop and lock the CBC into a high affinity cap-binding state with the cap structure. The protein is Nuclear cap-binding protein subunit 2 (Cbp20) of Drosophila willistoni (Fruit fly).